The sequence spans 209 residues: Ribosomal RNA large subunit methyltransferase E (209 aa).

Gly63, Trp65, Asp83, Asp99, and Asp124 together coordinate S-adenosyl-L-methionine. Lys164 (proton acceptor) is an active-site residue.

This sequence belongs to the class I-like SAM-binding methyltransferase superfamily. RNA methyltransferase RlmE family.

The protein localises to the cytoplasm. It catalyses the reaction uridine(2552) in 23S rRNA + S-adenosyl-L-methionine = 2'-O-methyluridine(2552) in 23S rRNA + S-adenosyl-L-homocysteine + H(+). Its function is as follows. Specifically methylates the uridine in position 2552 of 23S rRNA at the 2'-O position of the ribose in the fully assembled 50S ribosomal subunit. The polypeptide is Ribosomal RNA large subunit methyltransferase E (Pseudoalteromonas translucida (strain TAC 125)).